Consider the following 306-residue polypeptide: Ornithine carbamoyltransferase (306 aa).

Residues 50–53 (STRT), Gln77, Arg101, and 128–131 (HPCQ) contribute to the carbamoyl phosphate site. L-ornithine contacts are provided by residues Asn160, Asp224, and 228-229 (SM). Residues 264 to 265 (CL) and Arg292 contribute to the carbamoyl phosphate site.

The protein belongs to the aspartate/ornithine carbamoyltransferase superfamily. OTCase family.

Its subcellular location is the cytoplasm. The catalysed reaction is carbamoyl phosphate + L-ornithine = L-citrulline + phosphate + H(+). Its pathway is amino-acid biosynthesis; L-arginine biosynthesis; L-arginine from L-ornithine and carbamoyl phosphate: step 1/3. In terms of biological role, reversibly catalyzes the transfer of the carbamoyl group from carbamoyl phosphate (CP) to the N(epsilon) atom of ornithine (ORN) to produce L-citrulline. This Mycobacterium leprae (strain TN) protein is Ornithine carbamoyltransferase.